We begin with the raw amino-acid sequence, 1647 residues long: Transcription elongation factor SPT6 homolog (1647 aa).

Positions Met1–Ser209 are disordered. Residues Ser7–Gly20 are compositionally biased toward acidic residues. The span at Glu21–His30 shows a compositional bias: basic and acidic residues. Acidic residues predominate over residues Asp31 to Glu67. Residues Lys103–Lys114 show a composition bias toward basic residues. Positions Asp132–Asp151 are enriched in basic and acidic residues. Over residues Asp152 to Glu191 the composition is skewed to acidic residues. Positions Gly1103–Lys1174 constitute an S1 motif domain. The tract at residues Pro1429–Trp1647 is disordered. 2 repeat units span residues Gly1443–Trp1444 and Gly1452–Trp1453. Residues Gly1443 to Trp1647 are 12 X 2 AA repeats of [WG]-[GW] repeats. Residues Ser1462–Gly1471 show a composition bias toward gly residues. Residues Arg1496–Gly1507 show a composition bias toward basic and acidic residues. Tandem repeats lie at residues Trp1511–Gly1512, Gly1522–Trp1523, Gly1530–Trp1531, Gly1547–Trp1548, Trp1563–Gly1564, and Gly1574–Trp1575. Composition is skewed to gly residues over residues Ala1519–Gly1532, Lys1539–Ser1552, Gly1561–Ser1579, and Gly1588–Asp1600. A run of 4 repeats spans residues Trp1601–Gly1602, Gly1615–Trp1616, Gly1630–Trp1631, and Gly1646–Trp1647.

This sequence belongs to the SPT6 family. Interacts (via N-terminus) with IWS1. In terms of tissue distribution, expressed in shoot apical meristem, leaf primordia, vasculature of young leaves, inflorescence meristem, floral meristem, young floral organs, developing ovules and anthers.

The protein localises to the nucleus. Its function is as follows. Transcription elongation factor that enhances the transcription elongation by RNA polymerase II (RNAPII). Plays an important role in regulating embryo apical and basal patterning during early embryogenesis, partly through negative regulation of the transcription factors PHABULOSA and PHAVOLUTA. This Arabidopsis thaliana (Mouse-ear cress) protein is Transcription elongation factor SPT6 homolog.